The sequence spans 164 residues: ATP synthase subunit b (164 aa).

The helical transmembrane segment at 4–24 threads the bilayer; sequence LGINPTLFIAQLINFLLLIFI.

It belongs to the ATPase B chain family. F-type ATPases have 2 components, F(1) - the catalytic core - and F(0) - the membrane proton channel. F(1) has five subunits: alpha(3), beta(3), gamma(1), delta(1), epsilon(1). F(0) has four main subunits: a(1), b(2) and c(10-14). The alpha and beta chains form an alternating ring which encloses part of the gamma chain. F(1) is attached to F(0) by a central stalk formed by the gamma and epsilon chains, while a peripheral stalk is formed by the delta and b chains.

Its subcellular location is the cell membrane. Its function is as follows. F(1)F(0) ATP synthase produces ATP from ADP in the presence of a proton or sodium gradient. F-type ATPases consist of two structural domains, F(1) containing the extramembraneous catalytic core and F(0) containing the membrane proton channel, linked together by a central stalk and a peripheral stalk. During catalysis, ATP synthesis in the catalytic domain of F(1) is coupled via a rotary mechanism of the central stalk subunits to proton translocation. Functionally, component of the F(0) channel, it forms part of the peripheral stalk, linking F(1) to F(0). The sequence is that of ATP synthase subunit b from Chloroflexus aurantiacus (strain ATCC 29366 / DSM 635 / J-10-fl).